We begin with the raw amino-acid sequence, 296 residues long: Homoserine kinase (296 aa).

85–95 provides a ligand contact to ATP; sequence PVARGLGSSAA.

The protein belongs to the GHMP kinase family. Homoserine kinase subfamily.

It localises to the cytoplasm. The catalysed reaction is L-homoserine + ATP = O-phospho-L-homoserine + ADP + H(+). The protein operates within amino-acid biosynthesis; L-threonine biosynthesis; L-threonine from L-aspartate: step 4/5. Catalyzes the ATP-dependent phosphorylation of L-homoserine to L-homoserine phosphate. The sequence is that of Homoserine kinase from Moorella thermoacetica (strain ATCC 39073 / JCM 9320).